The sequence spans 332 residues: Cyclin-D1-binding protein 1 (332 aa).

At Ala-2 the chain carries N-acetylalanine. Interaction with TCF3 regions lie at residues 2–184 (ASAT…VDFV) and 150–332 (ISYN…CLLD). Interaction with RPLP0 stretches follow at residues 2 to 190 (ASAT…AHEE) and 240 to 332 (LIIP…CLLD). Residues 2–208 (ASATAPAAAA…DPYSGLLNDT (207 aa)) form a required for interaction with CCND1 region.

This sequence belongs to the CCNDBP1 family. In terms of assembly, interacts with CCND1 and GRAP2. May also interact with COPS5, RPLP0, SIRT6, SYF2 and TCF3. Post-translationally, phosphorylated.

The protein resides in the cytoplasm. It is found in the nucleus. Functionally, may negatively regulate cell cycle progression. May act at least in part via inhibition of the cyclin-D1/CDK4 complex, thereby preventing phosphorylation of RB1 and blocking E2F-dependent transcription. The protein is Cyclin-D1-binding protein 1 (CCNDBP1) of Macaca fascicularis (Crab-eating macaque).